The following is a 150-amino-acid chain: CCAAT/enhancer-binding protein gamma (150 aa).

K3 is covalently cross-linked (Glycyl lysine isopeptide (Lys-Gly) (interchain with G-Cter in SUMO2)). The tract at residues 27-94 (GLQQVPQLVP…QKAQDTLQRV (68 aa)) is disordered. A compositionally biased stretch (low complexity) spans 28–37 (LQQVPQLVPA). The span at 56–72 (SPMDRNSDEYRQRRERN) shows a compositional bias: basic and acidic residues. The 64-residue stretch at 62 to 125 (SDEYRQRRER…SVLKDLFLEH (64 aa)) folds into the bZIP domain. The basic motif stretch occupies residues 66-93 (RQRRERNNMAVKKSRLKSKQKAQDTLQR). The leucine-zipper stretch occupies residues 97 to 118 (LKEENERLEAKIKLLTKELSVL). A disordered region spans residues 129 to 150 (LADNVQPISTETTATNSDNPGQ). Residues 134–150 (QPISTETTATNSDNPGQ) are compositionally biased toward polar residues.

The protein belongs to the bZIP family. C/EBP subfamily. In terms of assembly, binds DNA as a dimer and can form stable heterodimers with CEBPA. Can form stable heterodimers with CEBPB. Interacts with ZNF638; this interaction increases transcriptional activation. Ubiquitous.

It localises to the nucleus. Its function is as follows. Transcription factor that binds to the promoter and the enhancer regions of target genes. Binds to the promoter and the enhancer of the immunoglobulin heavy chain. Binds to GPE1, a cis-acting element in the G-CSF gene promoter. Binds to the enhancer element PRE-I (positive regulatory element-I) of the IL-4 gene. Binds to the promoter and the enhancer of the alpha-1-fetoprotein gene. In Mus musculus (Mouse), this protein is CCAAT/enhancer-binding protein gamma (Cebpg).